The following is a 779-amino-acid chain: Mediator of RNA polymerase II transcription subunit 15 (779 aa).

Polar residues-rich tracts occupy residues 70–90 (NKNQ…NQQG) and 98–108 (ALQTLATQGTR). Disordered regions lie at residues 70 to 131 (NKNQ…GGNA), 209 to 407 (NPMQ…VPIG), 437 to 512 (FLRQ…NPQE), and 629 to 649 (PAKQ…TGSQ). The segment covering 114–130 (GQMGPGGPMGNQMGGGN) has biased composition (gly residues). Composition is skewed to low complexity over residues 209–232 (NPMQ…QPQG) and 240–270 (PNQM…QMNQ). Residues 274-284 (SSGGNQMGNLG) show a composition bias toward gly residues. Composition is skewed to low complexity over residues 285 to 295 (GNSPMNPGNMG), 304 to 329 (QQMP…QMNQ), and 339 to 350 (GPVQQQQQPGQV). Gly residues predominate over residues 351-361 (GMAGMGPGGPG). 3 stretches are compositionally biased toward low complexity: residues 362-383 (NLQQ…APGQ), 393-402 (NMQAMGNQGN), and 451-468 (GPGS…IPSP). Polar residues-rich tracts occupy residues 477–500 (QVSS…NTPG) and 640–649 (PSTSGSTGSQ).

The protein belongs to the Mediator complex subunit 15 family. Component of the Mediator complex.

It is found in the nucleus. Component of the Mediator complex, a coactivator involved in the regulated transcription of nearly all RNA polymerase II-dependent genes. Mediator functions as a bridge to convey information from gene-specific regulatory proteins to the basal RNA polymerase II transcription machinery. Mediator is recruited to promoters by direct interactions with regulatory proteins and serves as a scaffold for the assembly of a functional preinitiation complex with RNA polymerase II and the general transcription factors. In Aedes aegypti (Yellowfever mosquito), this protein is Mediator of RNA polymerase II transcription subunit 15 (MED15).